Here is a 76-residue protein sequence, read N- to C-terminus: Small ribosomal subunit protein bS21A (76 aa).

Residues 35–52 (HYEKPSEKRAREKAEAVR) show a composition bias toward basic and acidic residues. Positions 35–76 (HYEKPSEKRAREKAEAVRRARKLARKRAQREGLVSGRPAAAR) are disordered. Residues 53 to 62 (RARKLARKRA) are compositionally biased toward basic residues.

This sequence belongs to the bacterial ribosomal protein bS21 family.

The chain is Small ribosomal subunit protein bS21A from Chelativorans sp. (strain BNC1).